Consider the following 582-residue polypeptide: Tetratricopeptide repeat protein 24 (582 aa).

A disordered region spans residues 1–31 (MSSPNPEDVPRRPEPEPSSSNKKKKKRKWLR). TPR repeat units lie at residues 36–69 (IQAL…ASKA), 79–112 (QACA…EKAQ), 117–150 (GDQC…YQPQ), 154–187 (GEAW…YAQE), 236–271 (GHLY…VPGE), 273–306 (ATVL…HGSV), 313–346 (GRSF…ARDS), and 353–386 (WQAC…CQKE). Disordered regions lie at residues 418–481 (TSAP…RAGP) and 548–582 (VPNG…CTIV). Polar residues predominate over residues 441-454 (GSSTAGVQHRSSSG). A compositionally biased stretch (basic and acidic residues) spans 462 to 472 (EGHQKKKEERS).

The polypeptide is Tetratricopeptide repeat protein 24 (TTC24) (Homo sapiens (Human)).